The primary structure comprises 159 residues: MKLNEIRDNEGSSKDRIRVGRGIGSGKGKTGGRGVKGQKARSGVAINGFEGGQMPIYRRLPKRGFNNIFGSEFAVVSLGRIQTAIDAKKLDASATIDAAALKAAGVIRRVKDGVRILADGELTSKVAFEVAGASKPALEKIEKAGSSIKLLAVAVEASE.

Basic and acidic residues predominate over residues 1-18 (MKLNEIRDNEGSSKDRIR). Residues 1–37 (MKLNEIRDNEGSSKDRIRVGRGIGSGKGKTGGRGVKG) form a disordered region. Residues 21 to 35 (RGIGSGKGKTGGRGV) show a composition bias toward gly residues.

The protein belongs to the universal ribosomal protein uL15 family. As to quaternary structure, part of the 50S ribosomal subunit.

Binds to the 23S rRNA. In Agrobacterium fabrum (strain C58 / ATCC 33970) (Agrobacterium tumefaciens (strain C58)), this protein is Large ribosomal subunit protein uL15.